A 145-amino-acid chain; its full sequence is Actin-depolymerizing factor 11 (145 aa).

In terms of domain architecture, ADF-H spans 11-145 (SSGIGVAAEC…DIELLRERAH (135 aa)).

Belongs to the actin-binding proteins ADF family.

Its function is as follows. Actin-depolymerizing protein. Severs actin filaments (F-actin) and binds to actin monomers. The polypeptide is Actin-depolymerizing factor 11 (ADF11) (Oryza sativa subsp. japonica (Rice)).